A 234-amino-acid chain; its full sequence is ATP synthase subunit a 1 (234 aa).

A run of 6 helical transmembrane segments spans residues 29 to 49, 90 to 110, 116 to 136, 147 to 167, 186 to 206, and 207 to 227; these read FLVHVTHAWLIMLLLTGVALL, LIATLALFILFSNLIALIPGF, NLNTNAALALAVFGMTHVVGV, FVGPVWWLAPLILPIEIIGHL, IVLVIFFTLVPLLLPIPMMLM, and GILVAFIQTFVFTLLAMIYIA.

It belongs to the ATPase A chain family. As to quaternary structure, F-type ATPases have 2 components, CF(1) - the catalytic core - and CF(0) - the membrane proton channel. CF(1) has five subunits: alpha(3), beta(3), gamma(1), delta(1), epsilon(1). CF(0) has three main subunits: a(1), b(2) and c(9-12). The alpha and beta chains form an alternating ring which encloses part of the gamma chain. CF(1) is attached to CF(0) by a central stalk formed by the gamma and epsilon chains, while a peripheral stalk is formed by the delta and b chains.

The protein localises to the cell inner membrane. Functionally, key component of the proton channel; it plays a direct role in the translocation of protons across the membrane. The protein is ATP synthase subunit a 1 of Syntrophotalea carbinolica (strain DSM 2380 / NBRC 103641 / GraBd1) (Pelobacter carbinolicus).